We begin with the raw amino-acid sequence, 250 residues long: U6 snRNA phosphodiesterase 1 (250 aa).

The tract at residues 1 to 31 is disordered; that stretch reads MALVSYSSSEEDEGETSEPPGRRLPPLPPPT. Positions 22-31 are enriched in pro residues; that stretch reads RRLPPLPPPT. Residue His-105 is the Proton acceptor of the active site. AMP is bound at residue 105–107; it reads HIS. UMP-binding positions include Gln-149, Tyr-187, and 191–195; that span reads SFHVS. AMP-binding positions include Tyr-187 and 189 to 195; that span reads EPSFHVS. Catalysis depends on His-193, which acts as the Proton donor.

Belongs to the 2H phosphoesterase superfamily. USB1 family.

It is found in the nucleus. The enzyme catalyses a 3'-end uridylyl-uridine-RNA = a 3'-end 2',3'-cyclophospho-uridine-RNA + uridine. The catalysed reaction is a 3'-end uridylyl-adenosine-RNA = a 3'-end 2',3'-cyclophospho-uridine-RNA + adenosine. Functionally, 3'-5' RNA exonuclease that trims the 3' end of oligo(U) and oligo(A) tracts of the pre-U6 small nuclear RNA (snRNA) molecule, leading to the formation of a mature U6 snRNA 3' end-terminated with a 2',3'-cyclic phosphate. Participates in the U6 snRNA 3' end processing that prevents U6 snRNA degradation. In addition also removes uridines from the 3' end of U6atac snRNA and possibly the vault RNA VTRNA1-1. This is U6 snRNA phosphodiesterase 1 from Xenopus laevis (African clawed frog).